We begin with the raw amino-acid sequence, 464 residues long: Soluble pyridine nucleotide transhydrogenase (464 aa).

Residue 35 to 44 (DSRRVVGGNC) coordinates FAD.

Belongs to the class-I pyridine nucleotide-disulfide oxidoreductase family. FAD serves as cofactor.

It is found in the cytoplasm. It carries out the reaction NAD(+) + NADPH = NADH + NADP(+). In terms of biological role, conversion of NADPH, generated by peripheral catabolic pathways, to NADH, which can enter the respiratory chain for energy generation. The polypeptide is Soluble pyridine nucleotide transhydrogenase (Pseudomonas paraeruginosa (strain DSM 24068 / PA7) (Pseudomonas aeruginosa (strain PA7))).